Consider the following 134-residue polypeptide: Retinoid-binding protein 7 (134 aa).

The protein belongs to the calycin superfamily. Fatty-acid binding protein (FABP) family. Highly expressed in white adipose tissue and mammary gland.

It localises to the cytoplasm. Intracellular transport of retinol. The sequence is that of Retinoid-binding protein 7 (Rbp7) from Mus musculus (Mouse).